Here is a 340-residue protein sequence, read N- to C-terminus: GTP 3',8-cyclase (340 aa).

The 223-residue stretch at 8–230 folds into the Radical SAM core domain; sequence KLGRPIRDLR…EQHFEIDPVE (223 aa). Arginine 17 contacts GTP. The [4Fe-4S] cluster site is built by cysteine 24 and cysteine 28. Tyrosine 30 contributes to the S-adenosyl-L-methionine binding site. Cysteine 31 is a [4Fe-4S] cluster binding site. Residue arginine 71 coordinates GTP. Glycine 75 contacts S-adenosyl-L-methionine. Threonine 102 contributes to the GTP binding site. Serine 126 is a binding site for S-adenosyl-L-methionine. Lysine 163 is a binding site for GTP. Residue methionine 197 participates in S-adenosyl-L-methionine binding. Positions 261 and 264 each coordinate [4Fe-4S] cluster. 266-268 serves as a coordination point for GTP; it reads RAR. Cysteine 278 is a binding site for [4Fe-4S] cluster.

Belongs to the radical SAM superfamily. MoaA family. In terms of assembly, monomer and homodimer. Requires [4Fe-4S] cluster as cofactor.

It catalyses the reaction GTP + AH2 + S-adenosyl-L-methionine = (8S)-3',8-cyclo-7,8-dihydroguanosine 5'-triphosphate + 5'-deoxyadenosine + L-methionine + A + H(+). It functions in the pathway cofactor biosynthesis; molybdopterin biosynthesis. Its function is as follows. Catalyzes the cyclization of GTP to (8S)-3',8-cyclo-7,8-dihydroguanosine 5'-triphosphate. The chain is GTP 3',8-cyclase from Staphylococcus aureus (strain bovine RF122 / ET3-1).